A 110-amino-acid polypeptide reads, in one-letter code: Small ribosomal subunit protein bS16 (110 aa).

The tract at residues 84–110 (KREARNNPEKAVPRKERKAAAEAAAKK) is disordered.

Belongs to the bacterial ribosomal protein bS16 family.

In Rhodopseudomonas palustris (strain BisB18), this protein is Small ribosomal subunit protein bS16.